Consider the following 357-residue polypeptide: Trans-acting factor B (357 aa).

The segment at 226 to 257 (DDNDLEEEERNASGEQTTTAREESEALDTTSN) is disordered.

In terms of biological role, plasmid partition require REP1, REP2, and a cis-acting DNA sequence (known as STB). REP1 may act by intercalating in the yeast nuclear matrix and binding STB either directly or via REP2. This chain is Trans-acting factor B (B), found in Zygosaccharomyces bailii.